The sequence spans 88 residues: Large ribosomal subunit protein bL27 (88 aa).

The segment at 1–23 (MAHKKAGGSSRNGRDSAGRRLGV) is disordered.

The protein belongs to the bacterial ribosomal protein bL27 family.

In Methylorubrum extorquens (strain CM4 / NCIMB 13688) (Methylobacterium extorquens), this protein is Large ribosomal subunit protein bL27.